We begin with the raw amino-acid sequence, 778 residues long: Endonuclease MutS2 (778 aa).

328-335 (GPNTGGKT) serves as a coordination point for ATP. The 76-residue stretch at 703–778 (LDLRGKRYEE…GSGCTIANLG (76 aa)) folds into the Smr domain.

Belongs to the DNA mismatch repair MutS family. MutS2 subfamily. Homodimer. Binds to stalled ribosomes, contacting rRNA.

Endonuclease that is involved in the suppression of homologous recombination and thus may have a key role in the control of bacterial genetic diversity. Functionally, acts as a ribosome collision sensor, splitting the ribosome into its 2 subunits. Detects stalled/collided 70S ribosomes which it binds and splits by an ATP-hydrolysis driven conformational change. Acts upstream of the ribosome quality control system (RQC), a ribosome-associated complex that mediates the extraction of incompletely synthesized nascent chains from stalled ribosomes and their subsequent degradation. Probably generates substrates for RQC. In Streptococcus equi subsp. equi (strain 4047), this protein is Endonuclease MutS2.